Consider the following 278-residue polypeptide: Bifunctional protein FolD (278 aa).

Residues 165–167 (GRS) and S190 each bind NADP(+).

The protein belongs to the tetrahydrofolate dehydrogenase/cyclohydrolase family. As to quaternary structure, homodimer.

The enzyme catalyses (6R)-5,10-methylene-5,6,7,8-tetrahydrofolate + NADP(+) = (6R)-5,10-methenyltetrahydrofolate + NADPH. The catalysed reaction is (6R)-5,10-methenyltetrahydrofolate + H2O = (6R)-10-formyltetrahydrofolate + H(+). It functions in the pathway one-carbon metabolism; tetrahydrofolate interconversion. In terms of biological role, catalyzes the oxidation of 5,10-methylenetetrahydrofolate to 5,10-methenyltetrahydrofolate and then the hydrolysis of 5,10-methenyltetrahydrofolate to 10-formyltetrahydrofolate. This Clostridium tetani (strain Massachusetts / E88) protein is Bifunctional protein FolD.